The sequence spans 162 residues: Peptide methionine sulfoxide reductase MsrA (162 aa).

The active site involves cysteine 16.

This sequence belongs to the MsrA Met sulfoxide reductase family.

It catalyses the reaction L-methionyl-[protein] + [thioredoxin]-disulfide + H2O = L-methionyl-(S)-S-oxide-[protein] + [thioredoxin]-dithiol. The catalysed reaction is [thioredoxin]-disulfide + L-methionine + H2O = L-methionine (S)-S-oxide + [thioredoxin]-dithiol. Its function is as follows. Has an important function as a repair enzyme for proteins that have been inactivated by oxidation. Catalyzes the reversible oxidation-reduction of methionine sulfoxide in proteins to methionine. This Geobacter metallireducens (strain ATCC 53774 / DSM 7210 / GS-15) protein is Peptide methionine sulfoxide reductase MsrA.